The primary structure comprises 247 residues: Ubiquinone biosynthesis O-methyltransferase (247 aa).

The S-adenosyl-L-methionine site is built by Arg39, Gly70, Asp91, and Met134.

This sequence belongs to the methyltransferase superfamily. UbiG/COQ3 family.

The catalysed reaction is a 3-demethylubiquinol + S-adenosyl-L-methionine = a ubiquinol + S-adenosyl-L-homocysteine + H(+). It catalyses the reaction a 3-(all-trans-polyprenyl)benzene-1,2-diol + S-adenosyl-L-methionine = a 2-methoxy-6-(all-trans-polyprenyl)phenol + S-adenosyl-L-homocysteine + H(+). The protein operates within cofactor biosynthesis; ubiquinone biosynthesis. O-methyltransferase that catalyzes the 2 O-methylation steps in the ubiquinone biosynthetic pathway. This is Ubiquinone biosynthesis O-methyltransferase from Cereibacter sphaeroides (strain ATCC 17025 / ATH 2.4.3) (Rhodobacter sphaeroides).